A 207-amino-acid chain; its full sequence is Sodium/potassium-transporting ATPase subunit beta-1-interacting protein 1 (207 aa).

A signal peptide spans 1 to 21 (MGKCSGRCTLVAFCCLQLVAA). Residues 22 to 34 (LERQIFDFLGYQW) are Extracellular-facing. The chain crosses the membrane as a helical span at residues 35-55 (APILANFLHIMAVILGIFGTV). Topologically, residues 56 to 61 (QYRSRY) are cytoplasmic. A helical membrane pass occupies residues 62–82 (LILYAAWLVLWVGWNAFIICF). Residues 83–146 (YLEVGQLSQD…GCLLDYPYIE (64 aa)) lie on the Extracellular side of the membrane. The N-linked (GlcNAc...) asparagine glycan is linked to asparagine 100. The helical transmembrane segment at 147-167 (ALSSALQIFLALFGFVFACYV) threads the bilayer. The Cytoplasmic portion of the chain corresponds to 168–207 (SKVFLEEEDSFDFIGGFDSYGYQAPQKTSHLQLQPLYTSG).

It belongs to the NKAIN family. Interacts with ATP1B1 C-terminus.

The protein localises to the cell membrane. The chain is Sodium/potassium-transporting ATPase subunit beta-1-interacting protein 1 (NKAIN1) from Homo sapiens (Human).